We begin with the raw amino-acid sequence, 242 residues long: Protein HTATIP2 (242 aa).

Residue Ala-2 is modified to N-acetylalanine. Residues 2-25 form a required for interaction with elongation factor EEF1A1 region; the sequence is ADKEALPKLREDFKMQNKSVFILG. Ser-27, Gly-28, Glu-29, Thr-30, Arg-52, Arg-53, Leu-92, Gly-93, Tyr-143, Lys-147, Leu-170, and Arg-178 together coordinate NADPH. The active-site Proton acceptor is the Tyr-143. The active site involves Lys-147.

Monomer. Forms homodimers during oxidative stress. Interacts (via N-terminus) with elongation factor EEF1A1 (via middle-region); the interaction is direct and competes with EEF1A1 binding to guanyl-nucleotide exchange factor EEF1B2, thereby inhibiting GDP for GTP exchange and reactivation of EEF1A1. Interacts with nuclear transport receptors XPO4, IPO5/RANBP5, IPO7, IPO9 and KPNB1 as well as GCN1L1/GCN1 and LRPPRC probably through their HEAT repeats. Binds NCOA5/CIA.

It localises to the cytoplasm. In terms of biological role, represses translation by preventing reactivation of elongation factor eEF1A. May also inhibit nuclear import by competing with nuclear import substrates for binding to a subset of nuclear transport receptors. Has additionally been proposed to act as a redox sensor involved in cellular oxidative stress surveillance. This chain is Protein HTATIP2, found in Mus musculus (Mouse).